Consider the following 147-residue polypeptide: Cyanate hydratase (147 aa).

Active-site residues include Arg-88, Glu-91, and Ser-114.

This sequence belongs to the cyanase family.

It catalyses the reaction cyanate + hydrogencarbonate + 3 H(+) = NH4(+) + 2 CO2. Functionally, catalyzes the reaction of cyanate with bicarbonate to produce ammonia and carbon dioxide. The chain is Cyanate hydratase from Thiobacillus denitrificans (strain ATCC 25259 / T1).